The chain runs to 792 residues: Type 2 topoisomerase subunit B (792 aa).

The Toprim domain maps to 423 to 537 (CEIFLVEGDS…EGYVYIAEPP (115 aa)). Mg(2+)-binding residues include Glu429, Asp502, and Asp504.

The protein belongs to the type II topoisomerase GyrB family. In terms of assembly, heterotetramer, composed of two GyrA and two GyrB chains. In the heterotetramer, 'GyrA' contains the active site tyrosine that forms a transient covalent intermediate with DNA, while 'GyrB' binds cofactors and catalyzes ATP hydrolysis. The cofactor is Mg(2+). Mn(2+) serves as cofactor. Requires Ca(2+) as cofactor.

The protein resides in the cytoplasm. It catalyses the reaction ATP-dependent breakage, passage and rejoining of double-stranded DNA.. A type II topoisomerase. Despite its similarity to DNA gyrase, this enzyme is not able to supercoil DNA, and instead acts like topoisomerase IV. Relaxes both positively and negatively supercoiled DNA in an ATP-dependent fashion, decatenates interlocked circles. If this subunit is reconstituted with GyrA from E.coli the hybrid enzyme supercoils relaxed plasmid DNA; if paired with E.coli ParC supercoiling is not restored. This the first bacteria shown to not contain DNA gyrase, although it has 2 copies of a reverse gyrase that introduces positive supercoils. Type II topoisomerases break and join 2 DNA strands simultaneously in an ATP-dependent manner. The chain is Type 2 topoisomerase subunit B from Aquifex aeolicus (strain VF5).